A 361-amino-acid chain; its full sequence is MYIKSLQLINYRNYENLSIKLCPNVNVFIGDNAQGKTNVIEAIYYCGFAKSHRTNRDKELIEWNKDRAFIRLDVHKDRLDKIIDVNILKDGKKAISINSIKISKIGELIGTFNVVMFSPEDLKIVKESPGIRRRFIDMELSQLNKRYYHNLVQYNKVLHERNLVLKNKNINEEMLDIYDIQLAQYGENIIKTRLKYIEQLNKYSKEIHKEITSGKEEIEFKYISTVKDLDNIKDSMIKLLEQNRKKDIDKRATSIGPHRDDFNIYLNNIDAKIYGSQGQQRTSVLTIKFASLKIIKEITGEYPVLLLDDVLSELDFNRKRYVLTSIKNIQTVITCTGIEDLTSYLDENSKVFRVINGRIQC.

30-37 (GDNAQGKT) provides a ligand contact to ATP.

It belongs to the RecF family.

Its subcellular location is the cytoplasm. In terms of biological role, the RecF protein is involved in DNA metabolism; it is required for DNA replication and normal SOS inducibility. RecF binds preferentially to single-stranded, linear DNA. It also seems to bind ATP. This is DNA replication and repair protein RecF from Clostridium perfringens (strain ATCC 13124 / DSM 756 / JCM 1290 / NCIMB 6125 / NCTC 8237 / Type A).